The primary structure comprises 312 residues: Malate dehydrogenase (312 aa).

NAD(+) is bound by residues 7-13 (GAAGGIG) and D34. Residues R81 and R87 each contribute to the substrate site. Residues N94 and 117–119 (ITN) each bind NAD(+). Substrate contacts are provided by N119 and R153. The Proton acceptor role is filled by H177. M227 provides a ligand contact to NAD(+).

It belongs to the LDH/MDH superfamily. MDH type 1 family. As to quaternary structure, homodimer.

The catalysed reaction is (S)-malate + NAD(+) = oxaloacetate + NADH + H(+). Functionally, catalyzes the reversible oxidation of malate to oxaloacetate. The chain is Malate dehydrogenase from Shigella flexneri serotype 5b (strain 8401).